A 3262-amino-acid polypeptide reads, in one-letter code: Striated muscle-specific serine/threonine-protein kinase (3262 aa).

A disordered region spans residues 1–33; it reads MQKARGTRGEDAGTRAPPSPGVPPKRAKVGAGR. The residue at position 33 (Arg-33) is an Omega-N-methylarginine. An Ig-like 1 domain is found at 45-126; sequence PVFLRPLKNA…GQASCEAVLT (82 aa). Phosphoserine is present on Ser-141. Disordered regions lie at residues 155–185, 198–226, 280–720, and 814–875; these read RAFSTPTGGSDTLVGTSLDTPPTSVTGTSEE, EQEAGSGGGTRPLPGSPRQAQTTGAGPRH, GLHR…VSAG, and LAVR…APPT. The span at 158–185 shows a compositional bias: polar residues; it reads STPTGGSDTLVGTSLDTPPTSVTGTSEE. Positions 301 to 317 are enriched in pro residues; it reads PALPPPSKSALLPPPSP. Phosphoserine occurs at positions 368 and 375. At Thr-379 the chain carries Phosphothreonine. Residues Ser-382 and Ser-385 each carry the phosphoserine modification. Over residues 404-422 the composition is skewed to basic and acidic residues; that stretch reads ILDKLQFFEERRRSLERSD. Ser-423 carries the post-translational modification Phosphoserine. Thr-453 carries the phosphothreonine modification. 5 positions are modified to phosphoserine: Ser-457, Ser-463, Ser-493, Ser-511, and Ser-531. A compositionally biased stretch (basic and acidic residues) spans 459-473; sequence EELRSPRGSVAERRR. Over residues 510 to 522 the composition is skewed to basic and acidic residues; sequence TSREELVRSHESL. Residues 543 to 552 are compositionally biased toward polar residues; the sequence is RPSTPKTSRA. At Ser-554 the chain carries Phosphoserine. Composition is skewed to basic and acidic residues over residues 624 to 638 and 663 to 680; these read PESRTKAPSGRKREP and EKNRAGPEAEKRLRRGPE. Residues 727 to 815 form the Ig-like 2 domain; that stretch reads PVFEIPLQNM…GQATCASSLA (89 aa). Positions 820–830 are enriched in polar residues; sequence GSTSPFSSPIT. 3 consecutive Ig-like domains span residues 874 to 963, 968 to 1062, and 1069 to 1157; these read PTFK…ARLE, PESR…ARLT, and PLFT…AQLY. Cys-994 and Cys-1046 are disulfide-bonded. Ser-1133 and Ser-1177 each carry phosphoserine. Residues 1162–1185 are disordered; it reads RTAASGPSSKLEKMPSIPEEPEHG. In terms of domain architecture, Ig-like 6 spans 1193 to 1283; it reads PDFLRPLQDL…AACYAHLYVT (91 aa). Residues 1290–1387 form the Fibronectin type-III 1 domain; it reads PDGAPEVVAV…PSEPVQLLEH (98 aa). 2 Ig-like domains span residues 1389 to 1485 and 1490 to 1578; these read PPLE…VTLE and PRFE…AELS. Cys-1413 and Cys-1469 form a disulfide bridge. In terms of domain architecture, Protein kinase 1 spans 1606-1859; it reads YDIHQEIGRG…AEETLEHPWF (254 aa). ATP-binding positions include 1612-1620 and Lys-1635; that span reads IGRGAFSYL. Asp-1724 (proton acceptor) is an active-site residue. A disordered region spans residues 1913-2571; it reads MPRRQPPSGG…SQPNLSSSVQ (659 aa). The span at 1918–1927 shows a compositional bias: low complexity; sequence PPSGGLSSSS. Positions 1980-1990 are enriched in basic and acidic residues; it reads EQERTPSKDQE. Residues Ser-1993, Ser-2004, Ser-2019, Ser-2020, and Ser-2042 each carry the phosphoserine modification. Over residues 2009–2019 the composition is skewed to basic and acidic residues; the sequence is SPRRPELRRGS. Arg-2060 carries the post-translational modification Asymmetric dimethylarginine; alternate. Residue Arg-2060 is modified to Omega-N-methylarginine; alternate. The segment covering 2069–2081 has biased composition (low complexity); sequence AQRLQALRQRLLR. Ser-2114 and Ser-2135 each carry phosphoserine. Arg-2144 is subject to Omega-N-methylarginine. Polar residues predominate over residues 2168–2179; sequence ESPSLSALSETQ. Phosphoserine occurs at positions 2182 and 2207. The span at 2193–2207 shows a compositional bias: polar residues; sequence ITKSPEPSAVTSRDS. A compositionally biased stretch (pro residues) spans 2208–2218; sequence PQPPEPQPVPE. Residues 2219–2229 are compositionally biased toward basic and acidic residues; the sequence is KVPEPKPEPVR. Positions 2230–2268 are enriched in low complexity; sequence AAKPAQPPLALQMPTQPLTPYAQIMQSLQLSSPTLSPQD. Positions 2337–2348 are enriched in basic and acidic residues; sequence FEAKFKRSRESP. The span at 2349–2358 shows a compositional bias: low complexity; it reads LSRGLRLLSR. Over residues 2359–2375 the composition is skewed to basic and acidic residues; that stretch reads SRSEERGPFRGAEDDGI. Position 2379 is a phosphoserine (Ser-2379). Residue Thr-2383 is modified to Phosphothreonine. Residues 2387 to 2398 are compositionally biased toward basic and acidic residues; sequence LVRRPERSRSVQ. Residues Ser-2413, Ser-2417, Ser-2441, Ser-2442, Ser-2447, and Ser-2451 each carry the phosphoserine modification. Positions 2461 to 2487 are enriched in low complexity; that stretch reads SSTLERLSSRLQRSGSSEDSGGASGRS. Polar residues predominate over residues 2513–2523; that stretch reads QLGSQTGATTP. A phosphoserine mark is found at Ser-2524 and Ser-2527. Residues 2524–2543 show a composition bias toward low complexity; that stretch reads SAESLGSEASGTSGSSAPGE. Over residues 2546–2557 the composition is skewed to basic residues; sequence SRHRWGLSRLRK. Ser-2562 bears the Phosphoserine mark. The segment covering 2562–2571 has biased composition (polar residues); that stretch reads SQPNLSSSVQ. Residues 2586–2676 form the Ig-like 9 domain; that stretch reads PPVFHIKLKD…GSITSSCTVA (91 aa). Cysteines 2608 and 2660 form a disulfide. In terms of domain architecture, Fibronectin type-III 2 spans 2683–2777; that stretch reads KLAPPEVPQT…KVFIRGTPDS (95 aa). 3 disordered regions span residues 2756–2832, 2857–2899, and 2912–2960; these read RAGQ…MSAN, ATQQ…PAPS, and APPA…PQKP. A Phosphothreonine modification is found at Thr-2774. 2 stretches are compositionally biased toward low complexity: residues 2775–2789 and 2803–2831; these read PDSPAQPAAAPRDAP and PTSLAPTPALAPPASQASTLSPSTSSMSA. Ser-2777 is modified (phosphoserine). The Fibronectin type-III 3 domain occupies 2865 to 2968; sequence PPSIVVTPSE…KPYTFLEEKA (104 aa). A compositionally biased stretch (polar residues) spans 2883-2899; sequence GTLTPTSSPQGVKPAPS. Residues 2913–2927 are compositionally biased toward pro residues; the sequence is PPAPQAPAPEPPPEP. The segment covering 2943–2953 has biased composition (polar residues); it reads SSPTPESTTLR. Ser-2944 is modified (phosphoserine). The Protein kinase 2 domain maps to 2946-3213; it reads TPESTTLRQG…LQDCLAHPWL (268 aa). The active-site Proton acceptor is the Asp-3080.

It belongs to the protein kinase superfamily. CAMK Ser/Thr protein kinase family. Interacts with MTM1. Isoform 3 is found as a monomer or homodimer. Post-translationally, may be autophosphorylated. In terms of tissue distribution, isoform 1 is preferentially expressed in striated muscle. Non-kinase form such as isoform 3 is predominantly expressed in the aorta. Isoform 3 appears to be expressed only in highly differentiated ASMC in normal vessel walls and down-regulated in dedifferentiated ASMC in vivo. In response to vascular injuries ASMC dedifferentiate and change from a quiescent and contractile phenotype to a proliferative and synthetic phenotype. This proliferation of vascular smooth muscle cells is one of the most prominent features of atherosclerosis. Isoform 1 and isoform 4 are expressed in cardiomyocytes of the developing heart.

Its subcellular location is the nucleus. It carries out the reaction L-seryl-[protein] + ATP = O-phospho-L-seryl-[protein] + ADP + H(+). The enzyme catalyses L-threonyl-[protein] + ATP = O-phospho-L-threonyl-[protein] + ADP + H(+). Isoform 3 may have a role in regulating the growth and differentiation of arterial smooth muscle cells. This is Striated muscle-specific serine/threonine-protein kinase (Speg) from Mus musculus (Mouse).